We begin with the raw amino-acid sequence, 415 residues long: Neuromedin-U receptor 2 (415 aa).

The Extracellular portion of the chain corresponds to 1 to 49; it reads MSGMEKLQNASWIYQQKLEDPFQKHLNSTEEYLAFLCGPRRSHFFLPVS. N-linked (GlcNAc...) asparagine glycans are attached at residues N9 and N27. The helical transmembrane segment at 50 to 70 threads the bilayer; that stretch reads VVYVPIFVVGVIGNVLVCLVI. The Cytoplasmic portion of the chain corresponds to 71–82; that stretch reads LQHQAMKTPTNY. Residues 83–103 traverse the membrane as a helical segment; that stretch reads YLFSLAVSDLLVLLLGMPLEV. At 104-123 the chain is on the extracellular side; the sequence is YEMWRNYPFLFGPVGCYFKT. C119 and C204 are disulfide-bonded. The helical transmembrane segment at 124-146 threads the bilayer; it reads ALFETVCFASILSITTVSVERYV. Residues 147–165 are Cytoplasmic-facing; it reads AILHPFRAKLQSTRRRALR. Residues 166–186 form a helical membrane-spanning segment; sequence ILGIVWGFSVLFSLPNTSIHG. Residues 187 to 214 lie on the Extracellular side of the membrane; it reads IKFHYFPNGSLVPGSATCTVIKPMWIYN. Residue N194 is glycosylated (N-linked (GlcNAc...) asparagine). The helical transmembrane segment at 215 to 235 threads the bilayer; it reads FIIQVTSFLFYLLPMTVISVL. The Cytoplasmic segment spans residues 236–265; sequence YYLMALRLKKDKSLEADEGNANIQRPCRKS. A helical transmembrane segment spans residues 266 to 286; it reads VNKMLFVLVLVFAICWAPFHI. Residues 287 to 301 lie on the Extracellular side of the membrane; sequence DRLFFSFVEEWSESL. Residues 302–322 form a helical membrane-spanning segment; that stretch reads AAVFNLVHVVSGVFFYLSSAV. The Cytoplasmic segment spans residues 323-415; it reads NPIIYNLLSR…NYQSFHFNKT (93 aa).

Belongs to the G-protein coupled receptor 1 family. Predominantly expressed in the CNS, particularly in the medulla oblongata, pontine reticular formation, spinal cord, and thalamus. High level in testis whereas lower levels are present in a variety of peripheral tissues including the gastrointestinal tract, genitourinary tract, liver, pancreas, adrenal gland, thyroid gland, lung, trachea, spleen and thymus.

The protein localises to the cell membrane. In terms of biological role, receptor for the neuromedin-U and neuromedin-S neuropeptides. The polypeptide is Neuromedin-U receptor 2 (NMUR2) (Homo sapiens (Human)).